The primary structure comprises 289 residues: 4-diphosphocytidyl-2-C-methyl-D-erythritol kinase (289 aa).

Lysine 16 is a catalytic residue. Position 99 to 109 (99 to 109 (PMGGGIGGGSS)) interacts with ATP. The active site involves aspartate 141.

The protein belongs to the GHMP kinase family. IspE subfamily.

The catalysed reaction is 4-CDP-2-C-methyl-D-erythritol + ATP = 4-CDP-2-C-methyl-D-erythritol 2-phosphate + ADP + H(+). It functions in the pathway isoprenoid biosynthesis; isopentenyl diphosphate biosynthesis via DXP pathway; isopentenyl diphosphate from 1-deoxy-D-xylulose 5-phosphate: step 3/6. Its function is as follows. Catalyzes the phosphorylation of the position 2 hydroxy group of 4-diphosphocytidyl-2C-methyl-D-erythritol. The polypeptide is 4-diphosphocytidyl-2-C-methyl-D-erythritol kinase (Ralstonia nicotianae (strain ATCC BAA-1114 / GMI1000) (Ralstonia solanacearum)).